A 201-amino-acid polypeptide reads, in one-letter code: Potassium-transporting ATPase KdpC subunit (201 aa).

The chain crosses the membrane as a helical span at residues 13-33; sequence IIFIIFTILCGGIYTIFITGI.

Belongs to the KdpC family. As to quaternary structure, the system is composed of three essential subunits: KdpA, KdpB and KdpC.

Its subcellular location is the cell membrane. Part of the high-affinity ATP-driven potassium transport (or Kdp) system, which catalyzes the hydrolysis of ATP coupled with the electrogenic transport of potassium into the cytoplasm. This subunit acts as a catalytic chaperone that increases the ATP-binding affinity of the ATP-hydrolyzing subunit KdpB by the formation of a transient KdpB/KdpC/ATP ternary complex. This chain is Potassium-transporting ATPase KdpC subunit, found in Clostridium botulinum (strain Alaska E43 / Type E3).